Consider the following 558-residue polypeptide: MAGPVLLFKEGTSRSSGRDALRNNILAAVTLAEMLKSSLGPRGLDKMLIDSFGDVTITNDGATIVKEMEIQHPAAKLLVEAAKAQDAEVGDGTTSAVVLAGLLLDKAEELLEQNVHPTIIIDGYKKALTKALEIIDQLSLKIDVNDLSSPTAKAQLKKIVSTTMSSKFIAGGAEEIDKIIDLVIDAITIVAEKRPDGTYNVPLDLIKIDKKKGGSIEDSILVHGLVLDKEVVHAGMPRRVEKAKIAVLDAALEVEKPEISAKISITSPEQIKSFLDEEARYLKEMVDKLASIGANVVICQKGIDDVAQHFLAKKGILAVRRVKRSDIEKLEKALGARIISSIKDATPEDLGYAELVEERRIGNDKMVFIEGAKNPRAVNILLRGSNDMALDEAERSLNDALHSLRNVLMKPMIVAGGGAVESELALRLREYARSVGGKEQLAIEKFAEALEEIPMILAETAGMEPIQALMDLRARHAKGLVNSGIDAVNGKIADDMMKINVIEPVRVKSQVLKSAVEAATAILKIDDLVAASALKTEKGKKEGGEGAGAETPGAPSLE.

Residues 536-558 (TEKGKKEGGEGAGAETPGAPSLE) are disordered. Residues 548-558 (GAETPGAPSLE) are compositionally biased toward low complexity.

The protein belongs to the TCP-1 chaperonin family. As to quaternary structure, forms a Heterooligomeric complex of two stacked eight-membered rings.

Its function is as follows. Molecular chaperone; binds unfolded polypeptides in vitro, and has a weak ATPase activity. The sequence is that of Thermosome subunit alpha (thsA) from Sulfolobus acidocaldarius (strain ATCC 33909 / DSM 639 / JCM 8929 / NBRC 15157 / NCIMB 11770).